We begin with the raw amino-acid sequence, 191 residues long: ATP synthase subunit b 1 (191 aa).

A helical transmembrane segment spans residues 7-25; sequence RMRILCLCATTLLMAGSAL.

Belongs to the ATPase B chain family. F-type ATPases have 2 components, F(1) - the catalytic core - and F(0) - the membrane proton channel. F(1) has five subunits: alpha(3), beta(3), gamma(1), delta(1), epsilon(1). F(0) has three main subunits: a(1), b(2) and c(10-14). The alpha and beta chains form an alternating ring which encloses part of the gamma chain. F(1) is attached to F(0) by a central stalk formed by the gamma and epsilon chains, while a peripheral stalk is formed by the delta and b chains.

It localises to the cell inner membrane. Functionally, f(1)F(0) ATP synthase produces ATP from ADP in the presence of a proton or sodium gradient. F-type ATPases consist of two structural domains, F(1) containing the extramembraneous catalytic core and F(0) containing the membrane proton channel, linked together by a central stalk and a peripheral stalk. During catalysis, ATP synthesis in the catalytic domain of F(1) is coupled via a rotary mechanism of the central stalk subunits to proton translocation. Component of the F(0) channel, it forms part of the peripheral stalk, linking F(1) to F(0). The protein is ATP synthase subunit b 1 of Syntrophotalea carbinolica (strain DSM 2380 / NBRC 103641 / GraBd1) (Pelobacter carbinolicus).